A 49-amino-acid chain; its full sequence is Large ribosomal subunit protein bL33A (49 aa).

This sequence belongs to the bacterial ribosomal protein bL33 family.

This is Large ribosomal subunit protein bL33A from Lactobacillus delbrueckii subsp. bulgaricus (strain ATCC 11842 / DSM 20081 / BCRC 10696 / JCM 1002 / NBRC 13953 / NCIMB 11778 / NCTC 12712 / WDCM 00102 / Lb 14).